The chain runs to 248 residues: Small ribosomal subunit protein eS6 (248 aa).

The tract at residues Leu-213–Lys-248 is disordered. Over residues Ala-223–Lys-248 the composition is skewed to basic and acidic residues.

Belongs to the eukaryotic ribosomal protein eS6 family. As to quaternary structure, component of the small ribosomal subunit. Part of the small subunit (SSU) processome, composed of more than 70 proteins and the RNA chaperone small nucleolar RNA (snoRNA) U3. Post-translationally, ribosomal protein S6 is the major substrate of protein kinases in eukaryote ribosomes.

The protein localises to the cytoplasm. It localises to the nucleus. Its subcellular location is the nucleolus. Component of the 40S small ribosomal subunit. Plays an important role in controlling cell growth and proliferation through the selective translation of particular classes of mRNA. Part of the small subunit (SSU) processome, first precursor of the small eukaryotic ribosomal subunit. During the assembly of the SSU processome in the nucleolus, many ribosome biogenesis factors, an RNA chaperone and ribosomal proteins associate with the nascent pre-rRNA and work in concert to generate RNA folding, modifications, rearrangements and cleavage as well as targeted degradation of pre-ribosomal RNA by the RNA exosome. This chain is Small ribosomal subunit protein eS6 (RpS6), found in Glossina morsitans morsitans (Savannah tsetse fly).